The following is an 85-amino-acid chain: Large ribosomal subunit protein eL43 (85 aa).

Positions 32, 35, 50, and 53 each coordinate Zn(2+). Residues 32 to 53 form a C4-type zinc finger; it reads CTFCGKTKMKRRAVGIWHCGSC.

This sequence belongs to the eukaryotic ribosomal protein eL43 family. Component of the large ribosomal subunit.

Its subcellular location is the cytoplasm. Functionally, component of the large ribosomal subunit. The ribosome is a large ribonucleoprotein complex responsible for the synthesis of proteins in the cell. The polypeptide is Large ribosomal subunit protein eL43 (rpl37a) (Myxine glutinosa (Atlantic hagfish)).